The following is a 56-amino-acid chain: Lantibiotic subtilin (56 aa).

The propeptide occupies 1–24 (MSKFDDFDLDVVKVSKQDSKITPQ). N2-succinyltryptophan; partial is present on Trp25. Positions 27-31 (SESLC) form a cross-link, lanthionine (Ser-Cys). A 2,3-didehydroalanine (Ser) modification is found at Ser29. 4 consecutive cross-links (beta-methyllanthionine (Thr-Cys)) follow at residues 32–35 (TPGC), 37–43 (TGALQTC), 47–50 (TLTC), and 49–52 (TCNC). Thr42 bears the (Z)-2,3-didehydrobutyrine mark. A 2,3-didehydroalanine (Ser) modification is found at Ser55.

This sequence belongs to the type A lantibiotic family. In terms of processing, maturation of lantibiotics involves the enzymatic conversion of Thr, and Ser into dehydrated AA and the formation of thioether bonds with cysteine. This is followed by membrane translocation and cleavage of the modified precursor. Succinylated subtilin is 10-20 times less active than subtilin. The ratio subtilin/succinylated subtilin is about 1:2 after 24 hours growth. Post-translationally, the 2,3-didehydrobutyrine is determined to be the Z-isomer.

Its function is as follows. Lanthionine-containing peptide antibiotic (lantibiotic) active on Gram-positive bacteria. The bactericidal activity of lantibiotics is based on depolarization of energized bacterial cytoplasmic membranes, initiated by the formation of aqueous transmembrane pores. The polypeptide is Lantibiotic subtilin (spaS) (Bacillus subtilis).